A 488-amino-acid polypeptide reads, in one-letter code: MSDNIDSKICTVYTTDGHFQMTYQTIKENDFFKNIFEIVDSICVRMNSVEFEYVAQYLRKEIPKDILINFAYVVKNFGIDFENIVYFNIGGKIFSFEKDFVTKKFKYFERFIVNYPGLGPDYTSILIDKSYNKFQQVLDFVKNQKCPINNDLEIELEYYGWIPNKNIKEFIDVSHFNFIHEGYESFVNHLDQPKYVVSKHSVINDGDKNIYQANIHTMGHVIIVVCLKNNIKKVDLLSKIHVCFQKENEKVPGEENYRSLTNYYLLRKNKHQIIIREALSSQYGDFITYNFNMKISKDLEIDSIKFYCINNGNIRDYYDIPNKKIIEYGKDESIDKINIKLHDLIFSVENSKFSCNYLLNRGINKKIVMDYIFKKDGYVIDYLLFEIPTEIEVSHIELKSRDEIICVSKLEEITLVPPLNRYPNTGSRKIVPVLSNRPTKLYRINKLYNKKLNVNFLLSHEMFCEIVIVLKEPSSGWLKLKYQYMNYY.

Positions 83–150 (NIVYFNIGGK…VKNQKCPINN (68 aa)) constitute a BTB domain.

This sequence belongs to the mimivirus BTB/WD family.

The sequence is that of Putative BTB/POZ domain-containing protein L674 from Acanthamoeba polyphaga (Amoeba).